Reading from the N-terminus, the 344-residue chain is L-rhamnose-proton symporter (344 aa).

The next 10 membrane-spanning stretches (helical) occupy residues 4–24, 38–58, 68–88, 101–121, 137–157, 175–195, 214–234, 259–279, 290–310, and 323–343; these read AITM…CFYA, WSIG…ALLL, FNLS…IGNI, MGIG…TPII, TLLG…AGQL, LLLA…MNAA, LPSY…FCFV, ILLS…YAWG, ISWM…GLVL, and VLSL…MGMA.

This sequence belongs to the L-rhamnose transporter (TC 2.A.7.6) family.

The protein localises to the cell inner membrane. It carries out the reaction L-rhamnopyranose(in) + H(+)(in) = L-rhamnopyranose(out) + H(+)(out). Its function is as follows. Uptake of L-rhamnose across the cytoplasmic membrane with the concomitant transport of protons into the cell (symport system). In Citrobacter koseri (strain ATCC BAA-895 / CDC 4225-83 / SGSC4696), this protein is L-rhamnose-proton symporter.